The sequence spans 265 residues: Novel plant SNARE 11 (265 aa).

At 1 to 215 (MDPISAVSEE…IGRQVATDKC (215 aa)) the chain is on the cytoplasmic side. A coiled-coil region spans residues 30–75 (QKLEKIKDANRQSRQLEELTDKMRDCKSLIKDFDREIKSLESGNDA). The t-SNARE coiled-coil homology domain maps to 144–206 (NSMMDDTDQA…KKASKLVKEI (63 aa)). The chain crosses the membrane as a helical; Anchor for type IV membrane protein span at residues 216 to 236 (IMAFLFLIVIGVIAIIIVKIV). At 237 to 265 (NPNNKDIRDIPGVGLAPPAMNRRLLWNHY) the chain is on the vesicular side.

The protein belongs to the novel plant SNARE family. Interacts with KNOLLE to form a t-SNARE complex. Does not interact with SYP21, VTI12 or VPS45. As to expression, expressed in roots, stems, flower, siliques, expanding leaves, but not in mature leaves. Not limited to dividing cells.

It is found in the membrane. Functionally, t-SNARE involved in diverse vesicle trafficking and membrane fusion processes, including cell plate formation. In Arabidopsis thaliana (Mouse-ear cress), this protein is Novel plant SNARE 11 (NPSN11).